Consider the following 377-residue polypeptide: MIETNKKASWSELCPDVLRCVFELLSFSDLNRTRSVCSSWHSASRHCVPTQNQIPWLILFPRNNVNNNNNNSCVLFVPDDRDSLYKTKDLGVGFMLSNCLATYGSWILMMDRLCNLNILNPLTGEKIDLPRTKFDLPRLESSVACLWIDEKTKDYIVVWKIKNSLVYAKKGNHTWQQVFSMNEELSVEQIVYEHKTQKLYVHFNDSTLSIWRLSREDPHGVFENYIPFDFVFQDFLPDRRTDEELYVKEYIDTRLNIALTTSGELLKVASVVQKSKRWLFRIYKMNYIKRRWERIESLGDEALILDMGITIVAKDIPGLKRNSIYISGFDYGRKHLDHIFIFDLTTQESEPLPYCVSSSNDFSDARWFFPSFSQSPY.

Residues 8 to 55 (ASWSELCPDVLRCVFELLSFSDLNRTRSVCSSWHSASRHCVPTQNQIP) form the F-box domain.

The protein is F-box protein At2g05970 of Arabidopsis thaliana (Mouse-ear cress).